A 361-amino-acid polypeptide reads, in one-letter code: U7 snRNA-associated Sm-like protein LSm11 (361 aa).

The interval 1-26 is disordered; the sequence is MEEREWGARSARAGSPASPPSPRLDV. A phosphoserine mark is found at serine 15 and serine 21. Arginine 41 is subject to Omega-N-methylarginine. The tract at residues 67–142 is disordered; sequence RTGRGRARGT…QGPGRSKKAP (76 aa). Low complexity predominate over residues 76–96; it reads TGEPASAGTSTGTSTGAGSSS. Lysine 121 participates in a covalent cross-link: Glycyl lysine isopeptide (Lys-Gly) (interchain with G-Cter in SUMO2). The residue at position 155 (serine 155) is a Phosphoserine. Residues 155–230 form the Sm domain; it reads SPLGELHRCI…LTLTRLFDRL (76 aa). Residues 172 to 205 are SM 1; it reads VHIRTFKGLRGVCTGFLVAFDKFWNMALTDVDET. Residues 268 to 335 form a disordered region; that stretch reads RGDTDRSSHR…RKKKRKPKVD (68 aa). Serine 281 bears the Phosphoserine mark. The segment covering 307–323 has biased composition (polar residues); the sequence is GSSVGGTFSRATTLSRG. An SM 2 region spans residues 344 to 357; it reads INQIFIRGENVLLV.

Belongs to the snRNP Sm proteins family. In terms of assembly, component of the heptameric ring U7 snRNP complex, or U7 Sm protein core complex, at least composed of LSM10, LSM11, SNRPB, SNRPD3, SNRPE, SNRPF, SNRPG and U7 snRNA. Formation of the U7 snRNP is an ATP-dependent process mediated by a specialized SMN complex containing at least the Sm protein core complex and additionally, the U7-specific LSM10 and LSM11 proteins. Identified in a histone pre-mRNA complex, at least composed of ERI1, LSM11, SLBP, SNRPB, SYNCRIP and YBX1. Interacts (via the Sm domains) with CLNS1A. Interacts with PRMT5, SMN, ZNF473 and WDR77. In terms of processing, not methylated.

The protein localises to the nucleus. In terms of biological role, component of the U7 snRNP complex that is involved in the histone 3'-end pre-mRNA processing. Increases U7 snRNA levels but not histone 3'-end pre-mRNA processing activity, when overexpressed. Required for cell cycle progression from G1 to S phases. Binds specifically to the Sm-binding site of U7 snRNA. The chain is U7 snRNA-associated Sm-like protein LSm11 from Mus musculus (Mouse).